The chain runs to 286 residues: Phosphatidylserine decarboxylase proenzyme (286 aa).

Residues Asp-90, His-147, and Ser-250 each act as charge relay system; for autoendoproteolytic cleavage activity in the active site. Ser-250 acts as the Schiff-base intermediate with substrate; via pyruvic acid; for decarboxylase activity in catalysis. Pyruvic acid (Ser); by autocatalysis is present on Ser-250.

This sequence belongs to the phosphatidylserine decarboxylase family. PSD-B subfamily. Prokaryotic type I sub-subfamily. As to quaternary structure, heterodimer of a large membrane-associated beta subunit and a small pyruvoyl-containing alpha subunit. The cofactor is pyruvate. Post-translationally, is synthesized initially as an inactive proenzyme. Formation of the active enzyme involves a self-maturation process in which the active site pyruvoyl group is generated from an internal serine residue via an autocatalytic post-translational modification. Two non-identical subunits are generated from the proenzyme in this reaction, and the pyruvate is formed at the N-terminus of the alpha chain, which is derived from the carboxyl end of the proenzyme. The autoendoproteolytic cleavage occurs by a canonical serine protease mechanism, in which the side chain hydroxyl group of the serine supplies its oxygen atom to form the C-terminus of the beta chain, while the remainder of the serine residue undergoes an oxidative deamination to produce ammonia and the pyruvoyl prosthetic group on the alpha chain. During this reaction, the Ser that is part of the protease active site of the proenzyme becomes the pyruvoyl prosthetic group, which constitutes an essential element of the active site of the mature decarboxylase.

It is found in the cell membrane. It catalyses the reaction a 1,2-diacyl-sn-glycero-3-phospho-L-serine + H(+) = a 1,2-diacyl-sn-glycero-3-phosphoethanolamine + CO2. It participates in phospholipid metabolism; phosphatidylethanolamine biosynthesis; phosphatidylethanolamine from CDP-diacylglycerol: step 2/2. Catalyzes the formation of phosphatidylethanolamine (PtdEtn) from phosphatidylserine (PtdSer). The sequence is that of Phosphatidylserine decarboxylase proenzyme from Psychromonas ingrahamii (strain DSM 17664 / CCUG 51855 / 37).